The sequence spans 188 residues: MGVDIRHNKDRKVRRKEPKSQDIYLRLLVKLYRFLARRTNSTFNQVVLKRLFMSRTNRPPLSLSRMIRKMKLPGREGKTAVVVGTITDDVRVQEVPKLKVCALRVSSRARSRILKAGGKILTFDQLALDSPKGCGTVLLSGPRKGREVYRHFGKAPGTPHSHTKPYVRSKGRKFERARGRRASRGYKN.

Residue Lys119 forms a Glycyl lysine isopeptide (Lys-Gly) (interchain with G-Cter in SUMO2) linkage. Ser130 is modified (phosphoserine). The segment at 150-188 is disordered; that stretch reads RHFGKAPGTPHSHTKPYVRSKGRKFERARGRRASRGYKN. Phosphothreonine is present on Thr158. Basic residues-rich tracts occupy residues 161–171 and 178–188; these read SHTKPYVRSKG and RGRRASRGYKN. Residue Lys164 forms a Glycyl lysine isopeptide (Lys-Gly) (interchain with G-Cter in SUMO2) linkage.

The protein belongs to the eukaryotic ribosomal protein eL18 family. In terms of assembly, component of the large ribosomal subunit.

It is found in the cytoplasm. Its subcellular location is the cytosol. The protein localises to the rough endoplasmic reticulum. Component of the large ribosomal subunit. The ribosome is a large ribonucleoprotein complex responsible for the synthesis of proteins in the cell. The protein is Large ribosomal subunit protein eL18 (RPL18) of Bos taurus (Bovine).